We begin with the raw amino-acid sequence, 262 residues long: Thrombin-like enzyme gyroxin B1.3 (262 aa).

The first 18 residues, 1–18 (MVLIRVLANLLILQLSYA), serve as a signal peptide directing secretion. A propeptide spanning residues 19–262 (QKSSELVIGG…AGSETVNCPS (244 aa)) is cleaved from the precursor. The region spanning 25-253 (VIGGDECNIN…HLDWIQNIIA (229 aa)) is the Peptidase S1 domain. 6 cysteine pairs are disulfide-bonded: Cys-31/Cys-165, Cys-52/Cys-68, Cys-102/Cys-260, Cys-144/Cys-214, Cys-176/Cys-193, and Cys-204/Cys-229. The active-site Charge relay system is the His-67. N-linked (GlcNAc...) asparagine glycosylation occurs at Asn-105. Asp-112 acts as the Charge relay system in catalysis. The active-site Charge relay system is the Ser-208.

It belongs to the peptidase S1 family. Snake venom subfamily. Monomer. In terms of tissue distribution, expressed by the venom gland.

The protein localises to the secreted. Its function is as follows. Thrombin-like snake venom serine protease. Displays a specificity similar to trypsin. Releases only fibrinopeptide A in the conversion of fibrinogen to fibrin. Reversibly increases the permeability of the blood brain barrier (BBB) in mice. Induces the barrel rotation syndrome in mice, which is manifested by gyroxin-like, rapid rolling motions. This syndrome may be due to its effect on BBB permeability, and certainly also to other actions affecting endogenous substrates present in the endothelium, nervous tissues or blood. Also shows a moderate inhibitory activity on the human voltage-gated potassium channel Kv10.1/KCNH1/EAG1 (58% current inhibition at 5 uM). It blocks Kv10.1/KCNH1/EAG1 in a time and dose-dependent manner and with a mechanism independent of its enzymatic activity. It may have a preference in interacting with Kv10.1/KCNH1/EAG1 in its closed state, since the inhibitory effect of the toxin is decreased at more depolarized potentials. This is Thrombin-like enzyme gyroxin B1.3 from Crotalus durissus terrificus (South American rattlesnake).